A 1067-amino-acid polypeptide reads, in one-letter code: Tricorn protease homolog 1 (1067 aa).

The disordered stretch occupies residues 518–551 (TTPSPFGPQRHGRPFETPDREETPDSEGTPTTRI). Over residues 530-540 (RPFETPDREET) the composition is skewed to basic and acidic residues. His-740 serves as the catalytic Charge relay system. The interval 754 to 851 (RQGLLGADLS…HAVVVPLADE (98 aa)) is PDZ-like. Gly-914 contributes to the substrate binding site. Ser-961 serves as the catalytic Nucleophile. The Charge relay system role is filled by Glu-1019.

This sequence belongs to the peptidase S41B family. As to quaternary structure, forms a homohexameric complex; it is not known if it assembles into higher-order structures.

Its subcellular location is the cytoplasm. Stimulated by MgCl2. Functionally, degrades oligopeptides in a sequential manner. This is Tricorn protease homolog 1 (tri1) from Streptomyces coelicolor (strain ATCC BAA-471 / A3(2) / M145).